The following is a 92-amino-acid chain: Small ribosomal subunit protein uS19 (92 aa).

It belongs to the universal ribosomal protein uS19 family.

Functionally, protein S19 forms a complex with S13 that binds strongly to the 16S ribosomal RNA. The polypeptide is Small ribosomal subunit protein uS19 (Bartonella quintana (strain Toulouse) (Rochalimaea quintana)).